The chain runs to 135 residues: Large ribosomal subunit protein mL41 (135 aa).

The N-terminal 13 residues, 1–13 (MGVLSALARGFVR), are a transit peptide targeting the mitochondrion.

Belongs to the mitochondrion-specific ribosomal protein mL41 family. In terms of assembly, component of the mitochondrial ribosome large subunit (39S) which comprises a 16S rRNA and about 50 distinct proteins.

Its subcellular location is the mitochondrion. Its function is as follows. Component of the mitochondrial ribosome large subunit. Also involved in apoptosis and cell cycle. In Danio rerio (Zebrafish), this protein is Large ribosomal subunit protein mL41 (mrpl41).